We begin with the raw amino-acid sequence, 221 residues long: UPF0502 protein PSPTO_2686 (221 aa).

This sequence belongs to the UPF0502 family.

The chain is UPF0502 protein PSPTO_2686 from Pseudomonas syringae pv. tomato (strain ATCC BAA-871 / DC3000).